A 175-amino-acid chain; its full sequence is E1B protein, small T-antigen (175 aa).

The segment at 153–175 is disordered; the sequence is LAEEDEDEEGTTLTTEAEQESSA.

Belongs to the adenoviridae E1B 19 kDa protein family.

This chain is E1B protein, small T-antigen, found in Mus musculus (Mouse).